A 61-amino-acid polypeptide reads, in one-letter code: Small ribosomal subunit protein uS14B (61 aa).

4 residues coordinate Zn(2+): cysteine 24, cysteine 27, cysteine 40, and cysteine 43.

Belongs to the universal ribosomal protein uS14 family. Zinc-binding uS14 subfamily. In terms of assembly, part of the 30S ribosomal subunit. Contacts proteins S3 and S10. Zn(2+) serves as cofactor.

In terms of biological role, binds 16S rRNA, required for the assembly of 30S particles and may also be responsible for determining the conformation of the 16S rRNA at the A site. The protein is Small ribosomal subunit protein uS14B of Streptococcus agalactiae serotype Ia (strain ATCC 27591 / A909 / CDC SS700).